Reading from the N-terminus, the 180-residue chain is NADH-quinone oxidoreductase subunit I (180 aa).

4Fe-4S ferredoxin-type domains lie at 50–80 (LTRD…LQKA) and 90–119 (EFFR…LTPD). 8 residues coordinate [4Fe-4S] cluster: C60, C63, C66, C70, C99, C102, C105, and C109.

This sequence belongs to the complex I 23 kDa subunit family. In terms of assembly, NDH-1 is composed of 13 different subunits. Subunits NuoA, H, J, K, L, M, N constitute the membrane sector of the complex. [4Fe-4S] cluster is required as a cofactor.

Its subcellular location is the cell inner membrane. The catalysed reaction is a quinone + NADH + 5 H(+)(in) = a quinol + NAD(+) + 4 H(+)(out). Functionally, NDH-1 shuttles electrons from NADH, via FMN and iron-sulfur (Fe-S) centers, to quinones in the respiratory chain. The immediate electron acceptor for the enzyme in this species is believed to be ubiquinone. Couples the redox reaction to proton translocation (for every two electrons transferred, four hydrogen ions are translocated across the cytoplasmic membrane), and thus conserves the redox energy in a proton gradient. This is NADH-quinone oxidoreductase subunit I from Shigella boydii serotype 4 (strain Sb227).